A 150-amino-acid chain; its full sequence is Large ribosomal subunit protein bL9 (150 aa).

It belongs to the bacterial ribosomal protein bL9 family.

In terms of biological role, binds to the 23S rRNA. The polypeptide is Large ribosomal subunit protein bL9 (Halorhodospira halophila (strain DSM 244 / SL1) (Ectothiorhodospira halophila (strain DSM 244 / SL1))).